The chain runs to 245 residues: DNA repair protein RecO (245 aa).

The protein belongs to the RecO family.

Involved in DNA repair and RecF pathway recombination. This Bartonella bacilliformis (strain ATCC 35685 / KC583 / Herrer 020/F12,63) protein is DNA repair protein RecO.